A 306-amino-acid polypeptide reads, in one-letter code: Eukaryotic translation initiation factor 2 subunit alpha (306 aa).

In terms of domain architecture, S1 motif spans 17–88; sequence DELVVVNVRQ…EKGYIDLSKR (72 aa). The residue at position 52 (Ser-52) is a Phosphoserine. A Phosphothreonine modification is found at Thr-179. A phosphoserine mark is found at Ser-273, Ser-295, Ser-303, and Ser-305.

Belongs to the eIF-2-alpha family. In terms of assembly, eukaryotic translation initiation factor 2 eIF2 is a heterotrimeric complex composed of an alpha, a beta and a gamma subunit.

It is found in the cytoplasm. Its subcellular location is the cytosol. Functionally, eIF-2 functions in the early steps of protein synthesis by forming a ternary complex with GTP and initiator tRNA. This complex binds to a 40S ribosomal subunit, followed by mRNA binding to form a 43S pre-initiation complex. Junction of the 60S ribosomal subunit to form the 80S initiation complex is preceded by hydrolysis of the GTP bound to eIF-2 and release of an eIF-2-GDP binary complex. In order for eIF-2 to recycle and catalyze another round of initiation, the GDP bound to eIF-2 must exchange with GTP by way of a reaction catalyzed by eIF2B. In Schizosaccharomyces pombe (strain 972 / ATCC 24843) (Fission yeast), this protein is Eukaryotic translation initiation factor 2 subunit alpha (tif211).